The chain runs to 435 residues: 3-ketoacyl-CoA thiolase (435 aa).

The active-site Acyl-thioester intermediate is C98. Catalysis depends on proton acceptor residues H391 and C421.

This sequence belongs to the thiolase-like superfamily. Thiolase family. Heterotetramer of two alpha chains (FadJ) and two beta chains (FadI).

The protein resides in the cytoplasm. It carries out the reaction an acyl-CoA + acetyl-CoA = a 3-oxoacyl-CoA + CoA. The protein operates within lipid metabolism; fatty acid beta-oxidation. In terms of biological role, catalyzes the final step of fatty acid oxidation in which acetyl-CoA is released and the CoA ester of a fatty acid two carbons shorter is formed. The sequence is that of 3-ketoacyl-CoA thiolase from Vibrio vulnificus (strain CMCP6).